A 156-amino-acid polypeptide reads, in one-letter code: Small ribosomal subunit protein uS7 (156 aa).

This sequence belongs to the universal ribosomal protein uS7 family. As to quaternary structure, part of the 30S ribosomal subunit. Contacts proteins S9 and S11.

In terms of biological role, one of the primary rRNA binding proteins, it binds directly to 16S rRNA where it nucleates assembly of the head domain of the 30S subunit. Is located at the subunit interface close to the decoding center, probably blocks exit of the E-site tRNA. The chain is Small ribosomal subunit protein uS7 from Desulfosudis oleivorans (strain DSM 6200 / JCM 39069 / Hxd3) (Desulfococcus oleovorans).